The chain runs to 336 residues: Dihydroorotate dehydrogenase (quinone) (336 aa).

FMN contacts are provided by residues 62–66 (AGLDK) and Thr-86. Residue Lys-66 participates in substrate binding. 111–115 (NRMGF) serves as a coordination point for substrate. Residues Asn-139 and Asn-172 each contribute to the FMN site. Asn-172 is a substrate binding site. The Nucleophile role is filled by Ser-175. Asn-177 contributes to the substrate binding site. FMN is bound by residues Lys-217 and Thr-245. Substrate is bound at residue 246-247 (NT). Residues Gly-268, Gly-297, and 318 to 319 (YS) each bind FMN.

It belongs to the dihydroorotate dehydrogenase family. Type 2 subfamily. Monomer. It depends on FMN as a cofactor.

Its subcellular location is the cell membrane. It carries out the reaction (S)-dihydroorotate + a quinone = orotate + a quinol. The protein operates within pyrimidine metabolism; UMP biosynthesis via de novo pathway; orotate from (S)-dihydroorotate (quinone route): step 1/1. In terms of biological role, catalyzes the conversion of dihydroorotate to orotate with quinone as electron acceptor. This is Dihydroorotate dehydrogenase (quinone) from Escherichia coli (strain UTI89 / UPEC).